Here is a 368-residue protein sequence, read N- to C-terminus: 4-hydroxy-3-methylbut-2-en-1-yl diphosphate synthase (flavodoxin) (368 aa).

[4Fe-4S] cluster-binding residues include cysteine 271, cysteine 274, cysteine 306, and glutamate 313.

The protein belongs to the IspG family. [4Fe-4S] cluster serves as cofactor.

The catalysed reaction is (2E)-4-hydroxy-3-methylbut-2-enyl diphosphate + oxidized [flavodoxin] + H2O + 2 H(+) = 2-C-methyl-D-erythritol 2,4-cyclic diphosphate + reduced [flavodoxin]. Its pathway is isoprenoid biosynthesis; isopentenyl diphosphate biosynthesis via DXP pathway; isopentenyl diphosphate from 1-deoxy-D-xylulose 5-phosphate: step 5/6. Its function is as follows. Converts 2C-methyl-D-erythritol 2,4-cyclodiphosphate (ME-2,4cPP) into 1-hydroxy-2-methyl-2-(E)-butenyl 4-diphosphate. The chain is 4-hydroxy-3-methylbut-2-en-1-yl diphosphate synthase (flavodoxin) from Buchnera aphidicola subsp. Acyrthosiphon pisum (strain APS) (Acyrthosiphon pisum symbiotic bacterium).